A 186-amino-acid polypeptide reads, in one-letter code: FMN reductase (NADPH) (186 aa).

This sequence belongs to the SsuE family.

The enzyme catalyses FMNH2 + NADP(+) = FMN + NADPH + 2 H(+). This Pseudomonas aeruginosa (strain ATCC 15692 / DSM 22644 / CIP 104116 / JCM 14847 / LMG 12228 / 1C / PRS 101 / PAO1) protein is FMN reductase (NADPH) (msuE).